A 502-amino-acid chain; its full sequence is ATP synthase subunit alpha (502 aa).

Position 169-176 (169-176 (GDKQTGKT)) interacts with ATP.

Belongs to the ATPase alpha/beta chains family. F-type ATPases have 2 components, CF(1) - the catalytic core - and CF(0) - the membrane proton channel. CF(1) has five subunits: alpha(3), beta(3), gamma(1), delta(1), epsilon(1). CF(0) has three main subunits: a(1), b(2) and c(9-12). The alpha and beta chains form an alternating ring which encloses part of the gamma chain. CF(1) is attached to CF(0) by a central stalk formed by the gamma and epsilon chains, while a peripheral stalk is formed by the delta and b chains.

The protein resides in the cell membrane. It carries out the reaction ATP + H2O + 4 H(+)(in) = ADP + phosphate + 5 H(+)(out). Produces ATP from ADP in the presence of a proton gradient across the membrane. The alpha chain is a regulatory subunit. The polypeptide is ATP synthase subunit alpha (Lachnoclostridium phytofermentans (strain ATCC 700394 / DSM 18823 / ISDg) (Clostridium phytofermentans)).